The chain runs to 125 residues: MTVSRVCLLLLVALVYLDCCYAASIPRNFDPRLSEEIVMAPKKRPFCNAFTGCGRKRSQGPPGMPAQDLRTKQYLDEEALGSILDSESAIDELSRQILSEAKLWEAIQEASAEIARRKQKEAYIQ.

A signal peptide spans 1 to 22 (MTVSRVCLLLLVALVYLDCCYA). The propeptide occupies 23 to 42 (ASIPRNFDPRLSEEIVMAPK). A disulfide bridge links Cys47 with Cys53. At Cys53 the chain carries Cysteine amide. A propeptide spanning residues 57 to 125 (RSQGPPGMPA…RRKQKEAYIQ (69 aa)) is cleaved from the precursor.

Abdominal perivisceral organ; major neurohemal release site. Expressed in 116 neurons in post-embryonic central nervous system. Nine pairs of cells are observed in the brain, 4.5 pairs in the subesophageal ganglion, three pairs in each thoracic ganglion (T1-T3), three pairs in the first abdominal ganglion (A1), five pairs each in the second to sixth abdominal ganglia (A2-A6) and 7.5 pairs in the terminal ganglion. Expressed in every ganglion in each post-embryonic stage, except in the thoracic ganglia of first- and second-instar larvae. Colocalizes with CAP2b in median neurosecretory cells during the last larval instar through to adults.

Its subcellular location is the secreted. Cardioregulatory neurohormone that increases heart beat rate during adult wing inflation; has no effect on beat amplitude. The effect of CCAP is both ino- and chronotropic. This chain is Cardioactive peptide, found in Manduca sexta (Tobacco hawkmoth).